The following is a 201-amino-acid chain: Superoxide dismutase [Mn] (201 aa).

The Mn(2+) site is built by His-27, His-81, Asp-163, and His-167.

It belongs to the iron/manganese superoxide dismutase family. Homodimer. It depends on Mn(2+) as a cofactor.

It is found in the secreted. It catalyses the reaction 2 superoxide + 2 H(+) = H2O2 + O2. Its function is as follows. Destroys superoxide anion radicals which are normally produced within the cells and which are toxic to biological systems. This Streptococcus pyogenes serotype M18 (strain MGAS8232) protein is Superoxide dismutase [Mn] (sodA).